The sequence spans 1719 residues: Sodium channel protein type 4 subunit alpha B (1719 aa).

Residues 1–126 are Cytoplasmic-facing; the sequence is MRTLLPPVGS…IVAIKILIHS (126 aa). The tract at residues 28-50 is disordered; sequence QQIREEERKRTNAQVSEELPEPA. An I repeat occupies 108–431; sequence LLSPFNALRI…VVAMAYAEQN (324 aa). Residues 127–145 traverse the membrane as a helical segment; that stretch reads LFSLFIMATILTNCAFMTL. The Extracellular segment spans residues 146–152; that stretch reads SDPPAWS. The chain crosses the membrane as a helical span at residues 153–173; that stretch reads KTMEYVFTFIYTFEATIKILS. Over 174–187 the chain is Cytoplasmic; sequence RGFCVGKFTFLKDP. A helical membrane pass occupies residues 188 to 205; it reads WNWLDFMVISMAYLTELV. At 206–211 the chain is on the extracellular side; sequence DLGNVS. Asn-209 is a glycosylation site (N-linked (GlcNAc...) asparagine). Residues 212-228 traverse the membrane as a helical segment; sequence VLRTFRVLRALKTITVI. Residues 229–247 are Cytoplasmic-facing; the sequence is PGLKTIVGALIQSVRKLAD. Residues 248–267 traverse the membrane as a helical segment; it reads AMVLTVFCLSVFALIGLQLF. The Extracellular segment spans residues 268–368; that stretch reads MGNLRQKCVL…PNYGYTSYDS (101 aa). Cys-275 and Cys-337 are oxidised to a cystine. N-linked (GlcNAc...) asparagine glycans are attached at residues Asn-285 and Asn-339. Cys-346 and Cys-352 are disulfide-bonded. Positions 369–393 form an intramembrane region, pore-forming; that stretch reads FGWAFLALFRLMTQDFWENLFQLTL. Residues 394-400 are Extracellular-facing; the sequence is RTAGKTY. Residues 401-421 traverse the membrane as a helical segment; that stretch reads MIFFVVVIFLGSFYLINLILA. The Cytoplasmic segment spans residues 422-513; sequence VVAMAYAEQN…ECLYAIVMDP (92 aa). One copy of the II repeat lies at 495–766; it reads CCGCWRHLKE…QIAINRINRA (272 aa). The chain crosses the membrane as a helical span at residues 514–532; that stretch reads FVDLGITICIILNTVFMAM. At 533 to 543 the chain is on the extracellular side; the sequence is EHYPMSADFEE. A helical membrane pass occupies residues 544 to 563; the sequence is LLSVGNLVFTGIFTGEMVFK. Over 564-577 the chain is Cytoplasmic; that stretch reads ILAMDPYFYFQVGW. The chain crosses the membrane as a helical span at residues 578–597; it reads NIFDSIIVTISLVELGLANV. The Extracellular segment spans residues 598–599; that stretch reads QG. The helical transmembrane segment at 600-617 threads the bilayer; sequence LSVLRSFRLMRVFKLAKS. The Cytoplasmic segment spans residues 618–633; the sequence is WPTLNMLIKIIGNSVG. The chain crosses the membrane as a helical span at residues 634–652; that stretch reads ALGNLTLVLAIIVFIFAVV. At 653 to 681 the chain is on the extracellular side; sequence GMQLFGKNYKDCVCRISEDCVLPRWHMND. Cys-666 and Cys-672 are joined by a disulfide. An intramembrane region (pore-forming) is located at residues 682 to 702; the sequence is FFHAFLIIFRVLCGEWIESMW. The Extracellular portion of the chain corresponds to 703–713; the sequence is DCMEVSGQTMC. An intrachain disulfide couples Cys-704 to Cys-713. Residues 714–732 form a helical membrane-spanning segment; that stretch reads LIVFMMVLVIGNLVVLNLF. The Cytoplasmic portion of the chain corresponds to 733–919; that stretch reads LALLLSSFSG…TCFSIVENNY (187 aa). The segment covering 834–845 has biased composition (acidic residues); sequence SDSDDSDYDEDK. Residues 834 to 862 form a disordered region; it reads SDSDDSDYDEDKDSQCDESSVCSSVQKPE. Residues 900 to 1215 form an III repeat; that stretch reads RGKIWCNIRR…KKYYNAMKKL (316 aa). The chain crosses the membrane as a helical span at residues 920-937; the sequence is FESFIVFMILLSSGALAF. At 938–950 the chain is on the extracellular side; it reads EDIYLEKHQLIKS. The helical transmembrane segment at 951-969 threads the bilayer; sequence ILEYADKVFTYVFVMEMVL. At 970 to 983 the chain is on the cytoplasmic side; that stretch reads KWFAYGFKSYFSNA. A helical membrane pass occupies residues 984–1002; that stretch reads WCWLDFLIVDVSLVSLTAN. Residues 1003-1010 lie on the Extracellular side of the membrane; it reads ILGYSELG. The helical transmembrane segment at 1011–1029 threads the bilayer; it reads AIKSLRTLRALRPLRALSR. The Cytoplasmic portion of the chain corresponds to 1030-1046; that stretch reads FEGMRVVVNALVGAVPS. The chain crosses the membrane as a helical span at residues 1047–1066; sequence IFNVLLVCLIFWLIFSIMGV. The Extracellular portion of the chain corresponds to 1067-1119; it reads NLFAGKFSYCFNETSQEIIDTKVVDNKTECIALIKANFTEVRWKNVKVNYDNV. Cys-1076 and Cys-1096 are oxidised to a cystine. N-linked (GlcNAc...) asparagine glycosylation is found at Asn-1078 and Asn-1092. The segment at residues 1120–1141 is an intramembrane region (pore-forming); it reads GIGYLSLLQVATFKGWTDIMYA. Residues 1142 to 1158 are Extracellular-facing; sequence AVDSRDVESQPIYEVNL. A helical transmembrane segment spans residues 1159 to 1180; the sequence is YMYLYFVIFIIFGSFFTLNLFI. At 1181–1243 the chain is on the cytoplasmic side; the sequence is GVIIDNFNQQ…LVFDLVTKQI (63 aa). An important for rapid channel inactivation region spans residues 1199 to 1201; it reads IFM. The stretch at 1224–1521 is one IV repeat; sequence VPRPENPFQG…WEKFDPDASQ (298 aa). A helical transmembrane segment spans residues 1244–1261; that stretch reads FDVFIMVLICLNMVTMMV. Over 1262 to 1272 the chain is Extracellular; sequence ETDEQSDKKEE. A helical membrane pass occupies residues 1273–1291; sequence VLYWINVVFILIFTTECTL. Over 1292–1303 the chain is Cytoplasmic; that stretch reads KIIALRRHYFSI. A helical membrane pass occupies residues 1304–1321; sequence GWNIFDFVVVILSILGLL. Residues 1322-1334 are Extracellular-facing; the sequence is LADIIEKYFVSPT. The chain crosses the membrane as a helical span at residues 1335 to 1351; sequence LFRVIRLARIGRVLRLI. The Cytoplasmic portion of the chain corresponds to 1352 to 1370; the sequence is RGAKGIRTLLFALMMSLPA. A helical transmembrane segment spans residues 1371–1388; it reads LFNIGLLLFLIMFIFSIF. The Extracellular portion of the chain corresponds to 1389 to 1410; the sequence is GMSNFAYVKKEALIDDMFNFET. An intramembrane region (pore-forming) is located at residues 1411–1433; the sequence is FGNSMICLFMITTSAGWDGLLSP. At 1434-1462 the chain is on the extracellular side; sequence IMNTPPDCDPNVENPGTTVRGNCGSPAIG. Residues Cys-1441 and Cys-1456 are joined by a disulfide bond. The helical transmembrane segment at 1463–1485 threads the bilayer; the sequence is IAFFSTYIIMSFLVVVNMFIAII. Topologically, residues 1486–1719 are cytoplasmic; the sequence is LENFNVATEE…QERDQRETSV (234 aa). The 30-residue stretch at 1615 to 1644 folds into the IQ domain; that stretch reads EEVAATVIQRAYRKYLLLRTVRLASFMYRE.

The protein belongs to the sodium channel (TC 1.A.1.10) family. Nav1.4/SCN4A subfamily. As to quaternary structure, voltage-gated sodium (Nav) channels consist of an ion-conducting alpha subunit which is functional on its own associated with regulatory beta subunits.

The protein localises to the cell membrane. The catalysed reaction is Na(+)(in) = Na(+)(out). Functionally, pore-forming subunit of a voltage-gated sodium (Nav) channel that directly mediates the depolarizing phase of action potentials in excitable membranes. Navs, also called VGSCs (voltage-gated sodium channels) or VDSCs (voltage-dependent sodium channels), operate by switching between closed and open conformations depending on the voltage difference across the membrane. In the open conformation they allow Na(+) ions to selectively pass through the pore, along their electrochemical gradient. The influx of Na+ ions provokes membrane depolarization, initiating the propagation of electrical signals throughout cells and tissues. The polypeptide is Sodium channel protein type 4 subunit alpha B (scn4ab) (Takifugu rubripes (Japanese pufferfish)).